A 191-amino-acid chain; its full sequence is MGGSGSRLSKELLAEYQDLTFLTKQEILLAHRRFCELLPQEHRSVEESLQARVSLEQILSLPELKANPFKERICKVFSTSPSRDSLSFEDFLDLLSVFSDTATPDIKSHYAFRIFDFDDDGTLNREDLSQLVNCLTGESEDTRLSASEMKQLIDNILEESDIDRDGTINLSEFQHVISRSPDFASSFKIVL.

A lipid anchor (N-myristoyl glycine) is attached at glycine 2. 2 EF-hand domains span residues 103–138 and 148–183; these read TPDI…LTGE and EMKQ…SPDF. Residues aspartate 116, aspartate 118, aspartate 120, threonine 122, aspartate 127, aspartate 161, aspartate 163, aspartate 165, threonine 167, and glutamate 172 each contribute to the Ca(2+) site.

Monomer. Interacts with the heterodimeric integrin alpha-IIb/beta3 (ITGA2B-ITGB3). Interacts with ITGA2B (via cytoplasmic domain); the interaction is direct and calcium-dependent. Interacts with the protein kinases PLK2/SNK and PRKDC (via the region immediately upstream of the kinase domain). Interacts with PLK3; the interaction inhibits PLK3 kinase activity. Interacts with PSEN2. Interacts (via C-terminus) with F8. Interacts with NBR1 (via C-terminus). Interacts with FEZ1 (via C-terminus). Interacts with UBR5 (via C-terminus); the interaction is sensitive to DNA damage, and may target CIB1 for ubiquitin-mediated degradation. Interacts with IFI6; the interaction is direct. Interacts with BCL2. Interacts with ITPR3; the interaction occurs in a calcium dependent manner. Interacts with PTK2/FAK1. Interacts with MAP3K5; the interaction inhibits MAP3K5 activation by phosphorylation, and its subsequent interaction with TRAF2. Interacts (via C-terminal region) with STMN2 (via the N-terminal region); the interaction is direct, occurs in a calcium-dependent manner and attenuates the STMN2-induced neurite outgrowth inhibition. Interacts with SPHK1, the interaction occurs in a calcium-dependent manner. Interacts with ITGA2B (via C-terminal cytoplasmic tail); the interaction occurs upon platelet aggregation and is stabilized/increased in a calcium and magnesium-dependent manner. Interacts with PAK1 (via N-terminal region); the interaction is direct and occurs in a calcium-dependent manner. Interacts with RAC3 (via C-terminal region); the interaction induces their association with the cytoskeleton upon alpha-IIb/beta3 integrin-mediated adhesion. Interacts with ITGA5 and ITGAV. Interacts with MYO1C. Interacts with ITGA2B (via C-terminal cytoplasmic tail region). Interacts (via C-terminal region) with PPP3R1; the interaction increases upon cardiomyocytes hypertrophy. Interacts with CACNA1C; the interaction increases upon cardiomyocytes hypertrophy. Interacts with TAS1R2 (via C-terminus); this interaction is independent of the myristoylation state of CIB1. Interacts and forms a complex with TMC6 and TMC8; the interaction stabilizes each component of the complex.

The protein localises to the membrane. Its subcellular location is the cell membrane. The protein resides in the sarcolemma. It is found in the apical cell membrane. It localises to the cell projection. The protein localises to the ruffle membrane. Its subcellular location is the filopodium tip. The protein resides in the growth cone. It is found in the lamellipodium. It localises to the cytoplasm. The protein localises to the cytoskeleton. Its subcellular location is the microtubule organizing center. The protein resides in the centrosome. It is found in the perinuclear region. It localises to the nucleus. The protein localises to the neuron projection. Its subcellular location is the perikaryon. In terms of biological role, calcium-binding protein that plays a role in the regulation of numerous cellular processes, such as cell differentiation, cell division, cell proliferation, cell migration, thrombosis, angiogenesis, cardiac hypertrophy and apoptosis. Involved in bone marrow megakaryocyte differentiation by negatively regulating thrombopoietin-mediated signaling pathway. Participates in the endomitotic cell cycle of megakaryocyte, a form of mitosis in which both karyokinesis and cytokinesis are interrupted. Plays a role in integrin signaling by negatively regulating alpha-IIb/beta3 activation in thrombin-stimulated megakaryocytes preventing platelet aggregation. Up-regulates PTK2/FAK1 activity, and is also needed for the recruitment of PTK2/FAK1 to focal adhesions; it thus appears to play an important role in focal adhesion formation. Positively regulates cell migration on fibronectin in a CDC42-dependent manner, the effect being negatively regulated by PAK1. Functions as a negative regulator of stress activated MAP kinase (MAPK) signaling pathways. Down-regulates inositol 1,4,5-trisphosphate receptor-dependent calcium signaling. Involved in sphingosine kinase SPHK1 translocation to the plasma membrane in a N-myristoylation-dependent manner preventing TNF-alpha-induced apoptosis. Regulates serine/threonine-protein kinase PLK3 activity for proper completion of cell division progression. Plays a role in microtubule (MT) dynamics during neuronal development; disrupts the MT depolymerization activity of STMN2 attenuating NGF-induced neurite outgrowth and the MT reorganization at the edge of lamellipodia. Promotes cardiomyocyte hypertrophy via activation of the calcineurin/NFAT signaling pathway. Stimulates calcineurin PPP3R1 activity by mediating its anchoring to the sarcolemma. In ischemia-induced (pathological or adaptive) angiogenesis, stimulates endothelial cell proliferation, migration and microvessel formation by activating the PAK1 and ERK1/ERK2 signaling pathway. Also promotes cancer cell survival and proliferation. May regulate cell cycle and differentiation of spermatogenic germ cells, and/or differentiation of supporting Sertoli cells. Forms a complex with TMC6/EVER1 and TMC8/EVER2 in lymphocytes and keratynocytes where CIB1 stabilizes TMC6 and TMC8 levels and reciprocally. This is Calcium and integrin-binding protein 1 (CIB1) from Bos taurus (Bovine).